Here is a 190-residue protein sequence, read N- to C-terminus: MGLLDAGITNHNVLVTSVDNVLNWARLSSLWPMGFGLACCAIEMMATNASNYDLERFGIFPRSSPRQSDLMLVAGTVTMKMAERVIRLYEQMPEPRYVLSMGSCSNSGGPYWEHGYHVLKGVDRIIPVDVYVPGCPPRPESLIGGLMKVQELIRMEQIGLSRADALKKLAENPIDPQAIIEQQRKTAVAH.

The [4Fe-4S] cluster site is built by C39, C40, C104, and C135.

This sequence belongs to the complex I 20 kDa subunit family. NDH-1 is composed of 14 different subunits. Subunits NuoB, C, D, E, F, and G constitute the peripheral sector of the complex. The cofactor is [4Fe-4S] cluster.

The protein resides in the cell inner membrane. The catalysed reaction is a quinone + NADH + 5 H(+)(in) = a quinol + NAD(+) + 4 H(+)(out). Its function is as follows. NDH-1 shuttles electrons from NADH, via FMN and iron-sulfur (Fe-S) centers, to quinones in the respiratory chain. The immediate electron acceptor for the enzyme in this species is believed to be a menaquinone. Couples the redox reaction to proton translocation (for every two electrons transferred, four hydrogen ions are translocated across the cytoplasmic membrane), and thus conserves the redox energy in a proton gradient. The sequence is that of NADH-quinone oxidoreductase subunit B from Chlorobium chlorochromatii (strain CaD3).